We begin with the raw amino-acid sequence, 99 residues long: DNA-binding protein HmvA (99 aa).

Positions 52-55 (KTIK) are interaction with DNA.

It belongs to the archaeal histone HMF family. In terms of assembly, homodimer or heterodimer with another histone. Dimers then assemble into higher oligomers, with the DNA wrapped around the protein core.

The protein localises to the cytoplasm. It localises to the chromosome. Binds and compact DNA (95 to 150 base pairs) to form nucleosome-like structures that contain positive DNA supercoils. Increases the resistance of DNA to thermal denaturation (in vitro). In Methanococcus voltae, this protein is DNA-binding protein HmvA (hmvA).